A 54-amino-acid polypeptide reads, in one-letter code: MCTTLFLLSTLAMLWRRRFANRVQPEPSGADGAVVGSRSERDLQSSGRKEEPLK.

C2 carries S-palmitoyl cysteine lipidation. Residues 24–54 (QPEPSGADGAVVGSRSERDLQSSGRKEEPLK) form a disordered region. The segment covering 38–54 (RSERDLQSSGRKEEPLK) has biased composition (basic and acidic residues).

The protein belongs to the PRCD family. As to quaternary structure, interacts with RHO/rhodopsin; the interaction promotes PRCD stability. In terms of processing, palmitoylated at Cys-2. Palmitoylation is essential for protein stability and trafficking to the photoreceptor outer segment, but does not appear to be essential for membrane localization. Probably palmitoylated by ZDHHC3. Post-translationally, phosphorylated. In terms of tissue distribution, expressed in retina.

It localises to the cell projection. Its subcellular location is the cilium. The protein localises to the photoreceptor outer segment. The protein resides in the membrane. It is found in the endoplasmic reticulum. It localises to the golgi apparatus. Involved in vision. The sequence is that of Photoreceptor disk component PRCD from Canis lupus familiaris (Dog).